A 347-amino-acid chain; its full sequence is Eukaryotic translation initiation factor 3 subunit I (347 aa).

WD repeat units lie at residues 8-49, 51-89, 149-190, 194-233, and 291-330; these read GHER…GTLD, HMGSIWSIDSDHTSLYCVTGSADYTIKVWTLMNGQCVQT, THEG…KLVE, VHKDSVSDLQFSPDRTYFITCSRDSNAHIIDIETFKVLKT, and GHFGPLNSIAVSPQGTSYTSGGEEGLVRLHHFEKSYFDFK.

This sequence belongs to the eIF-3 subunit I family. Component of the eukaryotic translation initiation factor 3 (eIF-3) complex.

The protein localises to the cytoplasm. Its function is as follows. Component of the eukaryotic translation initiation factor 3 (eIF-3) complex, which is involved in protein synthesis of a specialized repertoire of mRNAs and, together with other initiation factors, stimulates binding of mRNA and methionyl-tRNAi to the 40S ribosome. The eIF-3 complex specifically targets and initiates translation of a subset of mRNAs involved in cell proliferation. This chain is Eukaryotic translation initiation factor 3 subunit I, found in Candida glabrata (strain ATCC 2001 / BCRC 20586 / JCM 3761 / NBRC 0622 / NRRL Y-65 / CBS 138) (Yeast).